We begin with the raw amino-acid sequence, 391 residues long: Succinate--CoA ligase [ADP-forming] subunit beta (391 aa).

In terms of domain architecture, ATP-grasp spans 9–248 (KDILRKFGVA…ITEEDPFEVE (240 aa)). Residues lysine 50, 57 to 59 (GRG), glutamate 103, methionine 106, and glutamate 111 each bind ATP. Asparagine 203 and aspartate 217 together coordinate Mg(2+). Residues asparagine 268 and 325–327 (GIV) contribute to the substrate site.

Belongs to the succinate/malate CoA ligase beta subunit family. As to quaternary structure, heterotetramer of two alpha and two beta subunits. Requires Mg(2+) as cofactor.

It catalyses the reaction succinate + ATP + CoA = succinyl-CoA + ADP + phosphate. The enzyme catalyses GTP + succinate + CoA = succinyl-CoA + GDP + phosphate. It functions in the pathway carbohydrate metabolism; tricarboxylic acid cycle; succinate from succinyl-CoA (ligase route): step 1/1. Functionally, succinyl-CoA synthetase functions in the citric acid cycle (TCA), coupling the hydrolysis of succinyl-CoA to the synthesis of either ATP or GTP and thus represents the only step of substrate-level phosphorylation in the TCA. The beta subunit provides nucleotide specificity of the enzyme and binds the substrate succinate, while the binding sites for coenzyme A and phosphate are found in the alpha subunit. The sequence is that of Succinate--CoA ligase [ADP-forming] subunit beta from Chlorobium phaeovibrioides (strain DSM 265 / 1930) (Prosthecochloris vibrioformis (strain DSM 265)).